Consider the following 562-residue polypeptide: IRK-interacting protein (562 aa).

Disordered stretches follow at residues 29–61 (ASLMQMKSSPSSNYSLRNPSSSSAASPASRPLP) and 303–322 (VVSQENSGGRSSGKKNSEMP). The span at 36-61 (SSPSSNYSLRNPSSSSAASPASRPLP) shows a compositional bias: low complexity. Residues 246–306 (SGVEKLKREL…LREATEVVSQ (61 aa)) adopt a coiled-coil conformation.

Interacts with IRK. Highly expressed in root tips, shoot apices and developing flowers.

The polypeptide is IRK-interacting protein (Arabidopsis thaliana (Mouse-ear cress)).